Consider the following 61-residue polypeptide: MKENEVKDEKSVDVLSFKQLESQKTVLPQDVFRNELTWFCYEIYKSLAFRIWMLLWLPLSI.

This sequence belongs to the DUP/COS family.

This is an uncharacterized protein from Saccharomyces cerevisiae (strain ATCC 204508 / S288c) (Baker's yeast).